The chain runs to 243 residues: Probable transcriptional regulatory protein LJ_0904 (243 aa).

The segment at 1-22 is disordered; that stretch reads MSGHSKWHNIQGRKNAQDAKRG.

Belongs to the TACO1 family.

The protein localises to the cytoplasm. The sequence is that of Probable transcriptional regulatory protein LJ_0904 from Lactobacillus johnsonii (strain CNCM I-12250 / La1 / NCC 533).